A 496-amino-acid polypeptide reads, in one-letter code: Acetyltransferase adrJ (496 aa).

Catalysis depends on proton acceptor residues histidine 174 and aspartate 421.

This sequence belongs to the plant acyltransferase family. In terms of assembly, monomer.

It participates in secondary metabolite biosynthesis; terpenoid biosynthesis. Its function is as follows. Acetyltransferase; part of the gene cluster that mediates the biosynthesis of andrastins, meroterpenoid compounds that exhibit inhibitory activity against ras farnesyltransferase, suggesting that they could be promising leads for antitumor agents. The first step of the pathway is the synthesis of 3,5-dimethylorsellinic acid (DMOA) by the polyketide synthase adrD via condensation of one acetyl-CoA starter unit with 3 malonyl-CoA units and 2 methylations. DMAO is then converted to farnesyl-DMAO by the prenyltransferase adrG. The methyltransferase adrK catalyzes the methylation of the carboxyl group of farnesyl-DMAO to farnesyl-DMAO methyl ester which is further converted to epoxyfarnesyl-DMAO methyl ester by the FAD-dependent monooxygenase adrH. The terpene cyclase adrI then catalyzes the carbon skeletal rearrangement to generate the andrastin E, the first compound in the pathway having the andrastin scaffold, with the tetracyclic ring system. The post-cyclization tailoring enzymes adrF, adrE, adrJ, and adrA, are involved in the conversion of andrastin E into andrastin A. The short chain dehydrogenase adrF is responsible for the oxidation of the C-3 a hydroxyl group of andrastin E to yield the corresponding ketone, andrastin D. The ketoreductase adrE stereoselectively reduces the carbonyl moiety to reverse the stereochemistry of the C-3 position to yield andrastin F. The acetyltransferase adrJ is the acetyltransferase that attaches the acetyl group to the C-3 hydroxyl group of andrastin F to yield andrastin C. Finally, the cytochrome P450 monooxygenase adrA catalyzes two sequential oxidation reactions of the C-23 methyl group, to generate the corresponding alcohol andrastin B, and aldehyde andrastin A. This chain is Acetyltransferase adrJ, found in Penicillium roqueforti.